The following is a 301-amino-acid chain: Phosducin-like protein (301 aa).

At Thr2 the chain carries N-acetylthreonine. The tract at residues 15–53 (YYYSSSEEEDSDHEDKDRGRGALAGSSMPADADLAGEGI) is disordered. Phosphoserine occurs at positions 20, 25, 226, 293, and 296. The Phosducin domain occupies 37–299 (LAGSSMPADA…TCHSEDSDLE (263 aa)). The interval 158–301 (FKQVFEIPSG…HSEDSDLEID (144 aa)) is thioredoxin fold.

It belongs to the phosducin family. Forms a complex with the beta and gamma subunits of the GTP-binding protein, transducin. Interacts with the CCT chaperonin complex.

The protein localises to the cell projection. It is found in the cilium. Functionally, functions as a co-chaperone for CCT in the assembly of heterotrimeric G protein complexes, facilitates the assembly of both Gbeta-Ggamma and RGS-Gbeta5 heterodimers. Also acts as a positive regulator of hedgehog signaling and regulates ciliary function. The chain is Phosducin-like protein (PDCL) from Bos taurus (Bovine).